The following is a 505-amino-acid chain: Lysine--tRNA ligase (505 aa).

Residues glutamate 415 and glutamate 422 each contribute to the Mg(2+) site.

The protein belongs to the class-II aminoacyl-tRNA synthetase family. As to quaternary structure, homodimer. It depends on Mg(2+) as a cofactor.

It localises to the cytoplasm. The enzyme catalyses tRNA(Lys) + L-lysine + ATP = L-lysyl-tRNA(Lys) + AMP + diphosphate. The chain is Lysine--tRNA ligase from Shigella boydii serotype 4 (strain Sb227).